The following is a 273-amino-acid chain: Glutamate racemase (273 aa).

Substrate is bound by residues 11–12 and 43–44; these read DS and YG. The active-site Proton donor/acceptor is the C74. 75-76 is a binding site for substrate; the sequence is NT. The Proton donor/acceptor role is filled by C185. Substrate is bound at residue 186-187; that stretch reads TH.

The protein belongs to the aspartate/glutamate racemases family.

It carries out the reaction L-glutamate = D-glutamate. It functions in the pathway cell wall biogenesis; peptidoglycan biosynthesis. In terms of biological role, provides the (R)-glutamate required for cell wall biosynthesis. The chain is Glutamate racemase from Lactiplantibacillus plantarum (strain ATCC BAA-793 / NCIMB 8826 / WCFS1) (Lactobacillus plantarum).